A 414-amino-acid polypeptide reads, in one-letter code: Histidinol dehydrogenase (414 aa).

NAD(+) contacts are provided by Y116, Q177, and N200. Substrate contacts are provided by T223, Q245, and H248. The Zn(2+) site is built by Q245 and H248. Active-site proton acceptor residues include E313 and H314. Substrate contacts are provided by H314, D347, E401, and H406. D347 provides a ligand contact to Zn(2+). H406 contacts Zn(2+).

This sequence belongs to the histidinol dehydrogenase family. It depends on Zn(2+) as a cofactor.

The enzyme catalyses L-histidinol + 2 NAD(+) + H2O = L-histidine + 2 NADH + 3 H(+). The protein operates within amino-acid biosynthesis; L-histidine biosynthesis; L-histidine from 5-phospho-alpha-D-ribose 1-diphosphate: step 9/9. Catalyzes the sequential NAD-dependent oxidations of L-histidinol to L-histidinaldehyde and then to L-histidine. The polypeptide is Histidinol dehydrogenase (Staphylococcus epidermidis (strain ATCC 12228 / FDA PCI 1200)).